The chain runs to 597 residues: MGKKHKKHKAEWRSSYEDYADKPLEKPLKLVLKVGGSEVTELSGSGHDSSYYDDRSDHERERHKEKKKKKKKKSEKEKHLDDEERRKRKEEKKRKREREHCDTEGEADDFDPGKKVEVEPPPDRPVRACRTQPAENESTPIQQLLEHFLRQLQRKDPHGFFAFPVTDAIAPGYSMIIKHPMDFGTMKDKIVANEYKSVTEFKADFKLMCDNAMTYNRPDTVYYKLAKKILHAGFKMMSKQAALLGNEDTAVEEPVPEVVPVQVETAKKSKKPSREVISCMFEPEGNACSLTDSTAEEHVLALVEHAADEARDRINRFLPGGKMGYLKRNGDGSLLYSVVNTAEPDADEEETHPVDLSSLSSKLLPGFTTLGFKDERRNKVTFLSSATTALSMQNNSVFGDLKSDEMELLYSAYGDETGVQCALSLQEFVKDAGSYSKKVVDDLLDQITGGDHSRTLFQLKQRRNVPMKPPDEAKVGDTLGDSSSSVLEFMSMKSYPDVSVDISMLSSLGKVKKELDPDDSHLNLDETTKLLQDLHEAQAERGGSRPSSNLSSLSNASERDQHHLGSPSRLSVGEQPDVTHDPYEFLQSPEPAASAKT.

Residues 1–10 (MGKKHKKHKA) show a composition bias toward basic residues. Disordered regions lie at residues 1 to 25 (MGKK…KPLE) and 38 to 138 (EVTE…ENES). 2 stretches are compositionally biased toward basic and acidic residues: residues 11-25 (EWRS…KPLE) and 50-62 (SYYD…ERER). Position 56 is a phosphoserine (S56). The segment covering 63 to 73 (HKEKKKKKKKK) has biased composition (basic residues). Residues 74–85 (SEKEKHLDDEER) show a composition bias toward basic and acidic residues. A compositionally biased stretch (basic residues) spans 86–97 (RKRKEEKKRKRE). A compositionally biased stretch (basic and acidic residues) spans 111–126 (DPGKKVEVEPPPDRPV). The Bromo domain maps to 136-240 (NESTPIQQLL…HAGFKMMSKQ (105 aa)). Positions 214–216 (TYN) are histone H4K5ac H4K8ac and histone H4K5bu H4K8bu binding. The residue at position 373 (K373) is an N6-acetyllysine; alternate. A Glycyl lysine isopeptide (Lys-Gly) (interchain with G-Cter in SUMO2); alternate cross-link involves residue K373. Residues 536 to 597 (EAQAERGGSR…SPEPAASAKT (62 aa)) are disordered. The segment covering 544–556 (SRPSSNLSSLSNA) has biased composition (low complexity). Phosphoserine is present on residues S566 and S588.

Binds acetylated histones H3 and H4. Binds butyrylated histone H4. Component of the multiprotein chromatin-remodeling subcomplex SWI/SNF called GBAF, which includes at least BICRA or BICRAL (mutually exclusive), BRD9, SS18, the core BAF subunits, SMARCA2/BRM, SMARCA4/BRG1/BAF190A, ACTL6A/BAF53, SMARCC1/BAF155, and SMARCD1/BAF60A. Interacts (via N-terminal bromodomain) with acetylated RAD54. Interacts (via C-terminus) with RAD51.

The protein localises to the nucleus. Functionally, plays a role in chromatin remodeling and regulation of transcription. Acts as a chromatin reader that recognizes and binds acylated histones: binds histones that are acetylated and/or butyrylated. Component of SWI/SNF chromatin remodeling subcomplex GBAF that carries out key enzymatic activities, changing chromatin structure by altering DNA-histone contacts within a nucleosome in an ATP-dependent manner. Also orchestrates the RAD51-RAD54 complex formation and thereby plays a role in homologous recombination (HR). The polypeptide is Bromodomain-containing protein 9 (BRD9) (Homo sapiens (Human)).